A 382-amino-acid polypeptide reads, in one-letter code: Lysophosphatidylserine lipase ABHD12 (382 aa).

Positions 1 to 12 are enriched in basic and acidic residues; it reads MRKRKGSADHDS. Positions 1 to 45 are disordered; it reads MRKRKGSADHDSSFTATLTDGSSDLKQCHKGTDADTDPGGSGKEM. The Cytoplasmic segment spans residues 1–60; it reads MRKRKGSADHDSSFTATLTDGSSDLKQCHKGTDADTDPGGSGKEMGRRCRRGGLMWRLRR. A compositionally biased stretch (polar residues) spans 13-25; that stretch reads SFTATLTDGSSDL. A helical transmembrane segment spans residues 61-81; the sequence is ILIWLLGIYIAIPVIIKVCPS. At 82–382 the chain is on the extracellular side; the sequence is IQAKLVFLNF…DFLRAPHPHG (301 aa). An N-linked (GlcNAc...) asparagine glycan is attached at asparagine 109. The Nucleophile role is filled by serine 232. Active-site charge relay system residues include aspartate 319 and histidine 358.

It belongs to the serine esterase family. Ubiquitously expressed in adult tissues.

It localises to the endoplasmic reticulum membrane. It carries out the reaction 1-(9Z-octadecenoyl)-sn-glycero-3-phospho-L-serine + H2O = sn-glycero-3-phospho-L-serine + (9Z)-octadecenoate + H(+). The catalysed reaction is 1-(9Z-octadecenoyl)-sn-glycero-3-phospho-(1'-sn-glycerol) + H2O = sn-glycero-3-phospho-(1'-sn-glycerol) + (9Z)-octadecenoate + H(+). It catalyses the reaction 1-(9Z-octadecenoyl)-sn-glycero-3-phospho-(1D-myo-inositol) + H2O = sn-glycero-3-phospho-1D-myo-inositol + (9Z)-octadecenoate + H(+). The enzyme catalyses 1-(9Z-octadecenoyl)-sn-glycero-3-phosphoethanolamine + H2O = sn-glycero-3-phosphoethanolamine + (9Z)-octadecenoate + H(+). It carries out the reaction 1-(9Z-octadecenoyl)-sn-glycero-3-phosphocholine + H2O = 1-(9Z-octadecenoyl)-sn-glycerol + phosphocholine + H(+). The catalysed reaction is 2-(9Z-octadecenoyl)-glycerol + H2O = glycerol + (9Z)-octadecenoate + H(+). It catalyses the reaction 1-hexadecanoyl-sn-glycero-3-phospho-L-serine + H2O = sn-glycero-3-phospho-L-serine + hexadecanoate + H(+). The enzyme catalyses 2-(5Z,8Z,11Z,14Z-eicosatetraenoyl)-glycerol + H2O = glycerol + (5Z,8Z,11Z,14Z)-eicosatetraenoate + H(+). It carries out the reaction Hydrolyzes glycerol monoesters of long-chain fatty acids.. The catalysed reaction is 1-decanoylglycerol + H2O = decanoate + glycerol + H(+). It catalyses the reaction 1-dodecanoylglycerol + H2O = dodecanoate + glycerol + H(+). The enzyme catalyses 1-tetradecanoylglycerol + H2O = tetradecanoate + glycerol + H(+). It carries out the reaction 2-hexadecanoylglycerol + H2O = glycerol + hexadecanoate + H(+). The catalysed reaction is 1-(9Z-octadecenoyl)-glycerol + H2O = glycerol + (9Z)-octadecenoate + H(+). It catalyses the reaction 2-(9Z,12Z-octadecadienoyl)-glycerol + H2O = (9Z,12Z)-octadecadienoate + glycerol + H(+). The enzyme catalyses 1-(5Z,8Z,11Z,14Z-eicosatetraenoyl)-glycerol + H2O = glycerol + (5Z,8Z,11Z,14Z)-eicosatetraenoate + H(+). It carries out the reaction 1-(9Z,12Z-octadecadienoyl)-glycerol + H2O = (9Z,12Z)-octadecadienoate + glycerol + H(+). The catalysed reaction is 1-hexadecanoylglycerol + H2O = glycerol + hexadecanoate + H(+). It catalyses the reaction 1-octadecanoylglycerol + H2O = octadecanoate + glycerol + H(+). The enzyme catalyses 1-octadecanoyl-2-(9,10-epoxyoctadecanoyl)-sn-glycero-3-phospho-L-serine + H2O = 9,10-epoxyoctadecanoate + 1-octadecanoyl-sn-glycero-3-phosphoserine + H(+). It carries out the reaction 1-octadecanoyl-2-(10-hydroxyoctadecanoyl)-sn-glycero-3-phospho-L-serine + H2O = 1-octadecanoyl-sn-glycero-3-phosphoserine + 10-hydroxyoctadecanoate + H(+). The catalysed reaction is 1-hexadecanoyl-2-(10-hydroxyoctadecanoyl)-sn-glycero-3-phospho-L-serine + H2O = 10-hydroxyoctadecanoate + 1-hexadecanoyl-sn-glycero-3-phospho-L-serine + H(+). In terms of biological role, lysophosphatidylserine (LPS) lipase that mediates the hydrolysis of lysophosphatidylserine, a class of signaling lipids that regulates immunological and neurological processes. Represents a major lysophosphatidylserine lipase in the brain, thereby playing a key role in the central nervous system. Also able to hydrolyze oxidized phosphatidylserine; oxidized phosphatidylserine is produced in response to severe inflammatory stress and constitutes a proapoptotic 'eat me' signal. Also has monoacylglycerol (MAG) lipase activity: hydrolyzes 2-arachidonoylglycerol (2-AG), thereby acting as a regulator of endocannabinoid signaling pathways. Has a strong preference for very-long-chain lipid substrates; substrate specificity is likely due to improved catalysis and not improved substrate binding. The sequence is that of Lysophosphatidylserine lipase ABHD12 from Danio rerio (Zebrafish).